Reading from the N-terminus, the 514-residue chain is 2-isopropylmalate synthase (514 aa).

In terms of domain architecture, Pyruvate carboxyltransferase spans 5–268; it reads LIIFDTTLRD…DVGIDTSQIV (264 aa). Mn(2+) contacts are provided by D14, H202, H204, and N239. Residues 395–514 form a regulatory domain region; that stretch reads KFVSLSQHSE…KDDKVNPQRS (120 aa).

This sequence belongs to the alpha-IPM synthase/homocitrate synthase family. LeuA type 1 subfamily. In terms of assembly, homodimer. The cofactor is Mn(2+).

The protein localises to the cytoplasm. It carries out the reaction 3-methyl-2-oxobutanoate + acetyl-CoA + H2O = (2S)-2-isopropylmalate + CoA + H(+). The protein operates within amino-acid biosynthesis; L-leucine biosynthesis; L-leucine from 3-methyl-2-oxobutanoate: step 1/4. In terms of biological role, catalyzes the condensation of the acetyl group of acetyl-CoA with 3-methyl-2-oxobutanoate (2-ketoisovalerate) to form 3-carboxy-3-hydroxy-4-methylpentanoate (2-isopropylmalate). The sequence is that of 2-isopropylmalate synthase from Burkholderia lata (strain ATCC 17760 / DSM 23089 / LMG 22485 / NCIMB 9086 / R18194 / 383).